Consider the following 463-residue polypeptide: Glycine--tRNA ligase (463 aa).

Residues R98 and E174 each contribute to the substrate site. Residues 206–208, 216–221, 290–291, and 334–337 each bind ATP; these read RNE, FRTREF, EL, and GADR. 221-225 is a substrate binding site; sequence FEQME. 330–334 serves as a coordination point for substrate; the sequence is EPSLG.

It belongs to the class-II aminoacyl-tRNA synthetase family. As to quaternary structure, homodimer.

Its subcellular location is the cytoplasm. It carries out the reaction tRNA(Gly) + glycine + ATP = glycyl-tRNA(Gly) + AMP + diphosphate. Functionally, catalyzes the attachment of glycine to tRNA(Gly). The protein is Glycine--tRNA ligase of Staphylococcus epidermidis (strain ATCC 35984 / DSM 28319 / BCRC 17069 / CCUG 31568 / BM 3577 / RP62A).